Reading from the N-terminus, the 312-residue chain is Olfactory receptor 10K2 (312 aa).

Over 1 to 25 the chain is Extracellular; the sequence is MERVNETVVREVIFLGFSSLARLQQ. Residue Asn-5 is glycosylated (N-linked (GlcNAc...) asparagine). The helical transmembrane segment at 26 to 46 threads the bilayer; that stretch reads LLFVIFLLLYLFTLGTNAIII. Topologically, residues 47-54 are cytoplasmic; the sequence is STIVLDRA. The chain crosses the membrane as a helical span at residues 55–75; it reads LHIPMYFFLAILSCSEICYTF. The Extracellular segment spans residues 76–99; sequence IIVPKMLVDLLSQKKTISFLGCAI. The chain crosses the membrane as a helical span at residues 100-120; it reads QMFSFLFLGCSHSFLLAVMGY. At 121 to 139 the chain is on the cytoplasmic side; sequence DRYIAICNPLRYSVLMGHG. Residues 140-160 form a helical membrane-spanning segment; it reads VCMGLVAAACACGFTVAQIIT. Topologically, residues 161–197 are extracellular; it reads SLVFHLPFYSSNQLHHFFCDIAPVLKLASHHNHFSQI. The helical transmembrane segment at 198 to 217 threads the bilayer; the sequence is VIFMLCTLVLAIPLLLILVS. Residues 218–237 lie on the Cytoplasmic side of the membrane; the sequence is YVHILSAILQFPSTLGRCKA. The chain crosses the membrane as a helical span at residues 238–258; sequence FSTCVSHLIIVTVHYGCASFI. Over 259 to 271 the chain is Extracellular; that stretch reads YLRPQSNYSSSQD. Asn-265 carries an N-linked (GlcNAc...) asparagine glycan. A helical transmembrane segment spans residues 272–292; that stretch reads ALISVSYTIITPLFNPMIYSL. Residues 293–312 are Cytoplasmic-facing; that stretch reads RNKEFKSALCKIVRRTISLL.

The protein belongs to the G-protein coupled receptor 1 family.

The protein localises to the cell membrane. Odorant receptor. The polypeptide is Olfactory receptor 10K2 (OR10K2) (Homo sapiens (Human)).